Here is a 119-residue protein sequence, read N- to C-terminus: Large ribosomal subunit protein bL20 (119 aa).

Belongs to the bacterial ribosomal protein bL20 family.

Functionally, binds directly to 23S ribosomal RNA and is necessary for the in vitro assembly process of the 50S ribosomal subunit. It is not involved in the protein synthesizing functions of that subunit. This Albidiferax ferrireducens (strain ATCC BAA-621 / DSM 15236 / T118) (Rhodoferax ferrireducens) protein is Large ribosomal subunit protein bL20.